The primary structure comprises 460 residues: UDP-N-acetylmuramoylalanine--D-glutamate ligase (460 aa).

G120–T126 lines the ATP pocket.

The protein belongs to the MurCDEF family.

The protein resides in the cytoplasm. The catalysed reaction is UDP-N-acetyl-alpha-D-muramoyl-L-alanine + D-glutamate + ATP = UDP-N-acetyl-alpha-D-muramoyl-L-alanyl-D-glutamate + ADP + phosphate + H(+). It participates in cell wall biogenesis; peptidoglycan biosynthesis. Its function is as follows. Cell wall formation. Catalyzes the addition of glutamate to the nucleotide precursor UDP-N-acetylmuramoyl-L-alanine (UMA). The chain is UDP-N-acetylmuramoylalanine--D-glutamate ligase from Lactobacillus gasseri (strain ATCC 33323 / DSM 20243 / BCRC 14619 / CIP 102991 / JCM 1131 / KCTC 3163 / NCIMB 11718 / NCTC 13722 / AM63).